The chain runs to 257 residues: 4-chloro-allylglycine synthase (257 aa).

6 residues coordinate Fe cation: Glu112, His119, Glu173, His203, Glu207, and His210.

The cofactor is Fe(2+).

It catalyses the reaction 4-chloro-L-lysine + AH2 + O2 = L-2-amino-4-chloropent-4-enoate + formaldehyde + A + NH4(+) + H2O. It participates in amino-acid metabolism. It functions in the pathway antibiotic biosynthesis. Involved in the biosynthesis of terminal alkyne-containing amino acids such as L-propargylglycine (Pra) and L-beta-ethynylserine, that are produced as antibiotics by S.cattleya. Catalyzes an oxidative C-C bond cleavage in 4-chloro-L-lysine to form 4-chloro-allyl-L-glycine (also named L-2-amino-4-chloropent-4-enoate), with release of formaldehyde and ammonia. Is also able to react with L-lysine directly to produce allylglycine in vitro. The protein is 4-chloro-allylglycine synthase of Streptantibioticus cattleyicolor (strain ATCC 35852 / DSM 46488 / JCM 4925 / NBRC 14057 / NRRL 8057) (Streptomyces cattleya).